The sequence spans 264 residues: 3-methyl-2-oxobutanoate hydroxymethyltransferase 2 (264 aa).

Mg(2+)-binding residues include Asp44 and Asp83. Residues Asp44–Ser45, Asp83, and Lys111 each bind 3-methyl-2-oxobutanoate. Residue Glu113 coordinates Mg(2+). The Proton acceptor role is filled by Glu180.

It belongs to the PanB family. Homodecamer; pentamer of dimers. The cofactor is Mg(2+).

Its subcellular location is the cytoplasm. The catalysed reaction is 3-methyl-2-oxobutanoate + (6R)-5,10-methylene-5,6,7,8-tetrahydrofolate + H2O = 2-dehydropantoate + (6S)-5,6,7,8-tetrahydrofolate. The protein operates within cofactor biosynthesis; (R)-pantothenate biosynthesis; (R)-pantoate from 3-methyl-2-oxobutanoate: step 1/2. Functionally, catalyzes the reversible reaction in which hydroxymethyl group from 5,10-methylenetetrahydrofolate is transferred onto alpha-ketoisovalerate to form ketopantoate. The protein is 3-methyl-2-oxobutanoate hydroxymethyltransferase 2 of Hahella chejuensis (strain KCTC 2396).